Reading from the N-terminus, the 368-residue chain is Histidinol-phosphate aminotransferase (368 aa).

Residue Lys-226 is modified to N6-(pyridoxal phosphate)lysine.

It belongs to the class-II pyridoxal-phosphate-dependent aminotransferase family. Histidinol-phosphate aminotransferase subfamily. As to quaternary structure, homodimer. Requires pyridoxal 5'-phosphate as cofactor.

The catalysed reaction is L-histidinol phosphate + 2-oxoglutarate = 3-(imidazol-4-yl)-2-oxopropyl phosphate + L-glutamate. The protein operates within amino-acid biosynthesis; L-histidine biosynthesis; L-histidine from 5-phospho-alpha-D-ribose 1-diphosphate: step 7/9. This chain is Histidinol-phosphate aminotransferase, found in Colwellia psychrerythraea (strain 34H / ATCC BAA-681) (Vibrio psychroerythus).